The chain runs to 271 residues: Putative phosphoenolpyruvate synthase regulatory protein (271 aa).

151–158 (GVSRSGKT) lines the ADP pocket.

It belongs to the pyruvate, phosphate/water dikinase regulatory protein family. PSRP subfamily.

The enzyme catalyses [pyruvate, water dikinase] + ADP = [pyruvate, water dikinase]-phosphate + AMP + H(+). It catalyses the reaction [pyruvate, water dikinase]-phosphate + phosphate + H(+) = [pyruvate, water dikinase] + diphosphate. Functionally, bifunctional serine/threonine kinase and phosphorylase involved in the regulation of the phosphoenolpyruvate synthase (PEPS) by catalyzing its phosphorylation/dephosphorylation. This Burkholderia ambifaria (strain MC40-6) protein is Putative phosphoenolpyruvate synthase regulatory protein.